The chain runs to 308 residues: Oxygen-dependent coproporphyrinogen-III oxidase (308 aa).

Substrate is bound at residue S100. The a divalent metal cation site is built by H104 and H114. H114 serves as the catalytic Proton donor. Residue 116-118 (NFR) participates in substrate binding. The a divalent metal cation site is built by H153 and H183. The segment at 248 to 283 (YVEFNLVFDRGTIFGLQSGGRTESILSSMPPMASWR) is important for dimerization. Substrate is bound at residue 266–268 (GGR).

The protein belongs to the aerobic coproporphyrinogen-III oxidase family. In terms of assembly, homodimer. A divalent metal cation is required as a cofactor.

Its subcellular location is the cytoplasm. It carries out the reaction coproporphyrinogen III + O2 + 2 H(+) = protoporphyrinogen IX + 2 CO2 + 2 H2O. It functions in the pathway porphyrin-containing compound metabolism; protoporphyrin-IX biosynthesis; protoporphyrinogen-IX from coproporphyrinogen-III (O2 route): step 1/1. In terms of biological role, involved in the heme biosynthesis. Catalyzes the aerobic oxidative decarboxylation of propionate groups of rings A and B of coproporphyrinogen-III to yield the vinyl groups in protoporphyrinogen-IX. The protein is Oxygen-dependent coproporphyrinogen-III oxidase of Francisella tularensis subsp. novicida (strain U112).